The sequence spans 1555 residues: Phospholipid-transporting ATPase DNF1 (1555 aa).

The disordered stretch occupies residues 1-85 (MAPPQEEGGG…SSNNGGSAPR (85 aa)). Topologically, residues 1–134 (MAPPQEEGGG…PKNLWFQFHN (134 aa)) are cytoplasmic. Residues 22-37 (WATRRLTVKSGARKRL) show a composition bias toward basic residues. The segment covering 72–82 (GSISSSNNGGS) has biased composition (low complexity). Residues 135 to 155 (IANIFFLFLVILVIFPIFGGV) form a helical membrane-spanning segment. A topological domain (extracellular) is located at residue N156. Residues 157–177 (PGLNSVPLIVIITVTAIKDAI) form a helical membrane-spanning segment. Residues 178 to 491 (EDYRRTILDI…ARIARELNFN (314 aa)) lie on the Cytoplasmic side of the membrane. Positions 257 to 288 (TRTAPWDPSHRRSVASHTEEIQMTPVPSPVPH) are disordered. The helical transmembrane segment at 492-512 (VICNFGILLIMCLIAAIANGI) threads the bilayer. The Extracellular segment spans residues 513-537 (AWGKTDASLAWFEYGSIGGTPALTG). The helical transmembrane segment at 538–558 (FITFWAAVIVFQNLVPISLYI) threads the bilayer. The Cytoplasmic portion of the chain corresponds to 559–1123 (SLEIVRTLQA…TISNFFYKNM (565 aa)). The 4-aspartylphosphate intermediate role is filled by D606. D606, K607, T608, E740, F781, S783, K786, K804, R839, T840, T919, G920, D921, R1031, and K1037 together coordinate ATP. D606 contributes to the Mg(2+) binding site. Position 608 (T608) interacts with Mg(2+). D1057 contributes to the Mg(2+) binding site. 2 residues coordinate ATP: N1060 and D1061. Position 1061 (D1061) interacts with Mg(2+). A helical transmembrane segment spans residues 1124-1144 (IWTWSIFWYQCYCNFDIAYIF). Residues 1145-1146 (EY) lie on the Extracellular side of the membrane. A helical membrane pass occupies residues 1147 to 1167 (TYILMFNLFFTSVPVILMGVL). The Cytoplasmic segment spans residues 1168-1200 (DQDVSDTVSLAVPQLYRRGIERKEWTQTKFWLY). Residues 1201 to 1221 (MIDGVYQSVMSFFIPFIFVVL) traverse the membrane as a helical segment. The Extracellular segment spans residues 1222–1237 (TPTAAGNGLDVSERTR). The chain crosses the membrane as a helical span at residues 1238 to 1258 (LGAYIAHPAVITINGYILINT). Topologically, residues 1259–1262 (YRWD) are cytoplasmic. The helical transmembrane segment at 1263–1283 (WLMLLSIVLSDVFIFFWTGVY) threads the bilayer. At 1284–1302 (TATTYSAGFYQAAPQVYQE) the chain is on the extracellular side. The helical transmembrane segment at 1303-1323 (LTFWMCLIVTPALCLLPRLVV) threads the bilayer. R1320 provides a ligand contact to a 1,2-diacyl-sn-glycero-3-phospho-L-serine. The Cytoplasmic segment spans residues 1324–1555 (KCIQKQRFPY…EGEPPREPPM (232 aa)). 2 disordered regions span residues 1364-1456 (VEGE…ERTR) and 1489-1555 (ESTH…EPPM). The segment covering 1406-1432 (ATHNTRAQNGSDGTTYIMQSRTSTELQ) has biased composition (polar residues). 2 stretches are compositionally biased toward basic and acidic residues: residues 1436-1456 (PFDRDREEETPAVRPSIERTR) and 1540-1555 (KSIDTTEGEPPREPPM).

It belongs to the cation transport ATPase (P-type) (TC 3.A.3) family. Type IV subfamily. As to quaternary structure, component of a flippase complex consisting of DNF1 and CDC50. Interacts with CDC50; the interaction is direct. The cofactor is Mg(2+).

Its subcellular location is the cell membrane. It localises to the endosome membrane. The protein resides in the golgi apparatus. It is found in the trans-Golgi network membrane. The catalysed reaction is ATP + H2O + phospholipidSide 1 = ADP + phosphate + phospholipidSide 2.. It catalyses the reaction a 1,2-diacyl-sn-glycero-3-phosphoethanolamine(out) + ATP + H2O = a 1,2-diacyl-sn-glycero-3-phosphoethanolamine(in) + ADP + phosphate + H(+). The enzyme catalyses a 1,2-diacyl-sn-glycero-3-phosphocholine(out) + ATP + H2O = a 1,2-diacyl-sn-glycero-3-phosphocholine(in) + ADP + phosphate + H(+). It carries out the reaction a beta-D-glucosyl-(1&lt;-&gt;1')-N-acylsphing-4-enine(out) + ATP + H2O = a beta-D-glucosyl-(1&lt;-&gt;1')-N-acylsphing-4-enine(in) + ADP + phosphate + H(+). The catalysed reaction is a 1,2-diacyl-sn-glycero-3-phospho-L-serine(out) + ATP + H2O = a 1,2-diacyl-sn-glycero-3-phospho-L-serine(in) + ADP + phosphate + H(+). Catalytic component of a P4-ATPase flippase complex which catalyzes the hydrolysis of ATP coupled to the transport of phosphatidylcholine and phosphatidylserine from the lumenal to the cytosolic leaflet of membranes and ensures the maintenance of asymmetric distribution of phospholipids. May also transport glucosylceramide and phosphatidylethanolamine. The chain is Phospholipid-transporting ATPase DNF1 from Chaetomium thermophilum (strain DSM 1495 / CBS 144.50 / IMI 039719) (Thermochaetoides thermophila).